Reading from the N-terminus, the 446-residue chain is Bifunctional protein GlmU (446 aa).

Residues 1–226 (MLAIAILAAG…PFEIKGINDR (226 aa)) are pyrophosphorylase. Residues 7-10 (LAAG), Lys21, Gln73, and 78-79 (GT) each bind UDP-N-acetyl-alpha-D-glucosamine. Mg(2+) is bound at residue Asp103. The UDP-N-acetyl-alpha-D-glucosamine site is built by Gly140, Glu155, Asn170, and Asn224. Asn224 serves as a coordination point for Mg(2+). The interval 227–247 (VQLSECEHYIQEELKSLWMSK) is linker. The segment at 248-446 (GVSFVDPISC…SKAIIRTKAD (199 aa)) is N-acetyltransferase. UDP-N-acetyl-alpha-D-glucosamine-binding residues include Arg329 and Lys347. His359 serves as the catalytic Proton acceptor. Residues Tyr362 and Asn373 each coordinate UDP-N-acetyl-alpha-D-glucosamine. Residues Ala376, Ala419, and Arg436 each coordinate acetyl-CoA.

This sequence in the N-terminal section; belongs to the N-acetylglucosamine-1-phosphate uridyltransferase family. The protein in the C-terminal section; belongs to the transferase hexapeptide repeat family. Homotrimer. Mg(2+) is required as a cofactor.

The protein localises to the cytoplasm. The catalysed reaction is alpha-D-glucosamine 1-phosphate + acetyl-CoA = N-acetyl-alpha-D-glucosamine 1-phosphate + CoA + H(+). The enzyme catalyses N-acetyl-alpha-D-glucosamine 1-phosphate + UTP + H(+) = UDP-N-acetyl-alpha-D-glucosamine + diphosphate. Its pathway is nucleotide-sugar biosynthesis; UDP-N-acetyl-alpha-D-glucosamine biosynthesis; N-acetyl-alpha-D-glucosamine 1-phosphate from alpha-D-glucosamine 6-phosphate (route II): step 2/2. The protein operates within nucleotide-sugar biosynthesis; UDP-N-acetyl-alpha-D-glucosamine biosynthesis; UDP-N-acetyl-alpha-D-glucosamine from N-acetyl-alpha-D-glucosamine 1-phosphate: step 1/1. It participates in bacterial outer membrane biogenesis; LPS lipid A biosynthesis. Catalyzes the last two sequential reactions in the de novo biosynthetic pathway for UDP-N-acetylglucosamine (UDP-GlcNAc). The C-terminal domain catalyzes the transfer of acetyl group from acetyl coenzyme A to glucosamine-1-phosphate (GlcN-1-P) to produce N-acetylglucosamine-1-phosphate (GlcNAc-1-P), which is converted into UDP-GlcNAc by the transfer of uridine 5-monophosphate (from uridine 5-triphosphate), a reaction catalyzed by the N-terminal domain. The chain is Bifunctional protein GlmU from Prochlorococcus marinus (strain NATL2A).